The primary structure comprises 347 residues: Aspartate carbamoyltransferase catalytic subunit (347 aa).

Carbamoyl phosphate contacts are provided by Arg75 and Thr76. Lys103 lines the L-aspartate pocket. Residues Arg125, His153, and Gln156 each coordinate carbamoyl phosphate. Residues Arg193 and Arg247 each contribute to the L-aspartate site. Carbamoyl phosphate-binding residues include Gly288 and Pro289.

This sequence belongs to the aspartate/ornithine carbamoyltransferase superfamily. ATCase family. In terms of assembly, heterododecamer (2C3:3R2) of six catalytic PyrB chains organized as two trimers (C3), and six regulatory PyrI chains organized as three dimers (R2).

It carries out the reaction carbamoyl phosphate + L-aspartate = N-carbamoyl-L-aspartate + phosphate + H(+). Its pathway is pyrimidine metabolism; UMP biosynthesis via de novo pathway; (S)-dihydroorotate from bicarbonate: step 2/3. Its function is as follows. Catalyzes the condensation of carbamoyl phosphate and aspartate to form carbamoyl aspartate and inorganic phosphate, the committed step in the de novo pyrimidine nucleotide biosynthesis pathway. This is Aspartate carbamoyltransferase catalytic subunit from Erythrobacter litoralis (strain HTCC2594).